Consider the following 87-residue polypeptide: MAHKKAGGSSRNGRDSESKRLGVKVYGGQAINAGGIIVRQRGTRMHPGENVGIGKDHTLFALTDGHVNFSTKGAAKKHMVNVVPAAV.

The segment at 1 to 21 (MAHKKAGGSSRNGRDSESKRL) is disordered.

It belongs to the bacterial ribosomal protein bL27 family.

The sequence is that of Large ribosomal subunit protein bL27 from Paraburkholderia phytofirmans (strain DSM 17436 / LMG 22146 / PsJN) (Burkholderia phytofirmans).